Here is a 134-residue protein sequence, read N- to C-terminus: Crustacean hyperglycemic hormones isoform B (134 aa).

Residues Met-1 to Gly-24 form the signal peptide. Gln-61 carries the post-translational modification Pyrrolidone carboxylic acid. Residue Phe-63 is modified to D-phenylalanine; in form CHH-B-II. Intrachain disulfides connect Cys-67–Cys-103, Cys-83–Cys-99, and Cys-86–Cys-112. Val-132 is modified (valine amide).

It belongs to the arthropod CHH/MIH/GIH/VIH hormone family. In terms of processing, stereoinversion of L-Phe (form CHH-B-I) to D-Phe (form CHH-B-II). In terms of tissue distribution, produced by the medulla terminalis X-organ in the eyestalks and transported to the sinus gland where they are stored and released. Present also in the ventral nervous system.

The protein resides in the secreted. Hormone found in the sinus gland of isopods and decapods which controls the blood sugar level. Has a secretagogue action over the amylase released from the midgut gland. May act as a stress hormone and may be involved in the control of molting and reproduction. The chain is Crustacean hyperglycemic hormones isoform B from Homarus americanus (American lobster).